A 291-amino-acid polypeptide reads, in one-letter code: Cell division protein FtsX (291 aa).

The Cytoplasmic portion of the chain corresponds to 1–18; sequence MSSNFDKFQKRRLISSYF. A helical transmembrane segment spans residues 19 to 39; it reads SVVLSVFLVLFLLGVLGLFII. At 40-162 the chain is on the periplasmic side; sequence NSKKLADDFK…VNLVNDNIKK (123 aa). Residues 163–183 form a helical membrane-spanning segment; that stretch reads VSMWILIISGFLTVIAVLLIN. Residues 184–220 lie on the Cytoplasmic side of the membrane; sequence SSLRLSIHSNRFIIKTMQMVGATKSFIRKPFVMRSVK. A helical transmembrane segment spans residues 221–241; the sequence is LGMLGALLAIIALIGLLFYVE. At 242–253 the chain is on the periplasmic side; that stretch reads TNFPGLGILEDK. Residues 254–274 traverse the membrane as a helical segment; the sequence is ALIGLVLLAVFGLGVLITWVS. Residues 275–291 lie on the Cytoplasmic side of the membrane; the sequence is THFATQRFLNLRTDDLY.

This sequence belongs to the ABC-4 integral membrane protein family. FtsX subfamily.

The protein localises to the cell inner membrane. In terms of biological role, required for cell division and gliding motility. This Flavobacterium johnsoniae (strain ATCC 17061 / DSM 2064 / JCM 8514 / BCRC 14874 / CCUG 350202 / NBRC 14942 / NCIMB 11054 / UW101) (Cytophaga johnsonae) protein is Cell division protein FtsX.